The sequence spans 340 residues: MIGAKTRVAIVGGIGYIGSCFASFIKEQNDKLIVTVIDNNKNNHVIKLLKKIGIEFYFADLLDRHKLTEVIAAIQPDVVFHFAAKTSVSESVHNPLKYFDCNVIGTLNLISAISNLQKPIKLFFASSAAVYGQTTNSYISEEIVITETQATNPYGLSKFLDELILNAVAKNSQLQVVCLRFFNVAGAILPFGNFNGNTTLLIPNLVKAFLKQTPFFLYGNDYATKDGSCIRDYIHVYDICNAHFLLWKWLNDHRQIKFETFNLGSGIGTSNLEVIDIAKKVFYPSRLNLEIRPKRSWDPAILVANVAKAKQTFQFKITRNLKDMISDERNFYENFYNDAY.

NAD(+) contacts are provided by residues 16-17 (YI), 37-42 (IDNNKN), 60-61 (DL), 82-86 (FAAKT), Ser127, Tyr154, Lys158, and Phe182. Residues Ser127 and Tyr154 each contribute to the substrate site. The active-site Proton acceptor is the Tyr154. Substrate is bound by residues Asn183, 199 to 200 (TL), 216 to 218 (FLY), Arg231, and 295 to 298 (RSWD).

It belongs to the NAD(P)-dependent epimerase/dehydratase family. In terms of assembly, homodimer. It depends on NAD(+) as a cofactor.

The enzyme catalyses UDP-alpha-D-glucose = UDP-alpha-D-galactose. It participates in carbohydrate metabolism; galactose metabolism. In terms of biological role, involved in the metabolism of galactose. Catalyzes the conversion of UDP-galactose (UDP-Gal) to UDP-glucose (UDP-Glc) through a mechanism involving the transient reduction of NAD. This chain is UDP-glucose 4-epimerase (galE), found in Mycoplasma genitalium (strain ATCC 33530 / DSM 19775 / NCTC 10195 / G37) (Mycoplasmoides genitalium).